The sequence spans 202 residues: NADH-quinone oxidoreductase subunit C (202 aa).

This sequence belongs to the complex I 30 kDa subunit family. As to quaternary structure, NDH-1 is composed of 14 different subunits. Subunits NuoB, C, D, E, F, and G constitute the peripheral sector of the complex.

The protein resides in the cell inner membrane. It catalyses the reaction a quinone + NADH + 5 H(+)(in) = a quinol + NAD(+) + 4 H(+)(out). In terms of biological role, NDH-1 shuttles electrons from NADH, via FMN and iron-sulfur (Fe-S) centers, to quinones in the respiratory chain. The immediate electron acceptor for the enzyme in this species is believed to be ubiquinone. Couples the redox reaction to proton translocation (for every two electrons transferred, four hydrogen ions are translocated across the cytoplasmic membrane), and thus conserves the redox energy in a proton gradient. This chain is NADH-quinone oxidoreductase subunit C, found in Brucella abortus (strain 2308).